The primary structure comprises 121 residues: Auxin-responsive protein SAUR32 (121 aa).

The protein belongs to the ARG7 family. As to expression, expressed in roots, leaves and stems.

It localises to the nucleus. It is found in the cytoplasm. Functionally, may play a role in the apical hook development. This Arabidopsis thaliana (Mouse-ear cress) protein is Auxin-responsive protein SAUR32.